Here is a 537-residue protein sequence, read N- to C-terminus: MTNTKFVFVTGGVLSSVGKGIAAASMGMLFKARGYKVTAIKMDPYLNVDAGTMSPYQHGEVFVTEDGAETDLDLGHYERFLDENLSGKNNITSGKIYSQVITKERKGDYLGSTVQVIPHVTDAIKESILYGAQGADLAVVEIGGTVGDIESLPFLEAVRQLRRELGPNGSVVVHVTYVPILETTHEAKTKPTQHSVKELRSIGLQPDAIVLRSHTPLEKHVLEKTSLFCDVPLEGVINSYDVESVYDVPLLLEQEKLISVLEERLFGTTTEADLKKWKEMLSRQSERTLKVALVGKYVVLPDAYLSVIEAIRHAAMKLGVAAHVSLMSSDELEKCDDEQLSEKLSNMDALVVPGGFGARGIEGMVKVLRYARENKMPTLGLCLGMQVMSIEFARNVLGLKDANSTEFDPNTTYPVISLLPEQMQVRDLGGSMRLGAYPCTLVEGTRVHALYNKPVVFERHRHRFEFNNEFREAFENNGFQVSGLYEPKDLVEVLELKDHPFYVGVQYHPEFKSRPMVPHPLFLGLLSEAVAKASPVL.

Residues 1-267 (MTNTKFVFVT…ISVLEERLFG (267 aa)) are amidoligase domain. CTP is bound at residue Ser15. Ser15 lines the UTP pocket. Residue 16 to 21 (SVGKGI) participates in ATP binding. Residue Tyr56 participates in L-glutamine binding. Position 73 (Asp73) interacts with ATP. The Mg(2+) site is built by Asp73 and Glu141. Residues 148–150 (DIE), 188–193 (KTKPTQ), and Lys224 each bind CTP. UTP-binding positions include 188–193 (KTKPTQ) and Lys224. The region spanning 297–535 (YVVLPDAYLS…LSEAVAKASP (239 aa)) is the Glutamine amidotransferase type-1 domain. An L-glutamine-binding site is contributed by Gly355. Cys382 serves as the catalytic Nucleophile; for glutamine hydrolysis. Residues 383 to 386 (LGMQ), Glu406, and Arg463 contribute to the L-glutamine site. Catalysis depends on residues His508 and Glu510.

This sequence belongs to the CTP synthase family. In terms of assembly, homotetramer.

It catalyses the reaction UTP + L-glutamine + ATP + H2O = CTP + L-glutamate + ADP + phosphate + 2 H(+). The catalysed reaction is L-glutamine + H2O = L-glutamate + NH4(+). The enzyme catalyses UTP + NH4(+) + ATP = CTP + ADP + phosphate + 2 H(+). The protein operates within pyrimidine metabolism; CTP biosynthesis via de novo pathway; CTP from UDP: step 2/2. Its activity is regulated as follows. Allosterically activated by GTP, when glutamine is the substrate; GTP has no effect on the reaction when ammonia is the substrate. The allosteric effector GTP functions by stabilizing the protein conformation that binds the tetrahedral intermediate(s) formed during glutamine hydrolysis. Inhibited by the product CTP, via allosteric rather than competitive inhibition. Catalyzes the ATP-dependent amination of UTP to CTP with either L-glutamine or ammonia as the source of nitrogen. Regulates intracellular CTP levels through interactions with the four ribonucleotide triphosphates. The sequence is that of CTP synthase from Coprothermobacter proteolyticus (strain ATCC 35245 / DSM 5265 / OCM 4 / BT).